The following is a 409-amino-acid chain: Calsequestrin-2 (409 aa).

An N-terminal signal peptide occupies residues methionine 1–alanine 19. Residue tyrosine 282 is modified to Phosphotyrosine. Asparagine 335 carries an N-linked (GlcNAc...) asparagine glycan. Residues aspartate 364–glutamate 409 form a disordered region. Acidic residues predominate over residues glutamate 373–glutamate 409.

This sequence belongs to the calsequestrin family. As to quaternary structure, monomer, homodimer and homooligomer. Mostly monomeric in the absence of calcium. Forms higher oligomers in a calcium-dependent manner. Dimers associate to form tetramers, that then form linear homomer chains. Interacts with ASPH and TRDN. Post-translationally, phosphorylation in the C-terminus, probably by CK2, moderately increases calcium buffering capacity. N-glycosylated. In terms of tissue distribution, detected in heart muscle (at protein level).

The protein localises to the sarcoplasmic reticulum lumen. Functionally, calsequestrin is a high-capacity, moderate affinity, calcium-binding protein and thus acts as an internal calcium store in muscle. Calcium ions are bound by clusters of acidic residues at the protein surface, especially at the interface between subunits. Can bind around 60 Ca(2+) ions. Regulates the release of lumenal Ca(2+) via the calcium release channel RYR2; this plays an important role in triggering muscle contraction. Plays a role in excitation-contraction coupling in the heart and in regulating the rate of heart beats. This Oryctolagus cuniculus (Rabbit) protein is Calsequestrin-2 (CASQ2).